Here is a 1373-residue protein sequence, read N- to C-terminus: DNA-directed RNA polymerase subunit beta (1373 aa).

This sequence belongs to the RNA polymerase beta chain family. The RNAP catalytic core consists of 2 alpha, 1 beta, 1 beta' and 1 omega subunit. When a sigma factor is associated with the core the holoenzyme is formed, which can initiate transcription.

The enzyme catalyses RNA(n) + a ribonucleoside 5'-triphosphate = RNA(n+1) + diphosphate. DNA-dependent RNA polymerase catalyzes the transcription of DNA into RNA using the four ribonucleoside triphosphates as substrates. This chain is DNA-directed RNA polymerase subunit beta, found in Rhodopseudomonas palustris (strain BisB18).